Here is a 409-residue protein sequence, read N- to C-terminus: Arginine biosynthesis bifunctional protein ArgJ (409 aa).

Substrate contacts are provided by T156, K182, T193, E280, N404, and S409. The active-site Nucleophile is T193.

This sequence belongs to the ArgJ family. As to quaternary structure, heterotetramer of two alpha and two beta chains.

It localises to the cytoplasm. It catalyses the reaction N(2)-acetyl-L-ornithine + L-glutamate = N-acetyl-L-glutamate + L-ornithine. It carries out the reaction L-glutamate + acetyl-CoA = N-acetyl-L-glutamate + CoA + H(+). The protein operates within amino-acid biosynthesis; L-arginine biosynthesis; L-ornithine and N-acetyl-L-glutamate from L-glutamate and N(2)-acetyl-L-ornithine (cyclic): step 1/1. It functions in the pathway amino-acid biosynthesis; L-arginine biosynthesis; N(2)-acetyl-L-ornithine from L-glutamate: step 1/4. Its function is as follows. Catalyzes two activities which are involved in the cyclic version of arginine biosynthesis: the synthesis of N-acetylglutamate from glutamate and acetyl-CoA as the acetyl donor, and of ornithine by transacetylation between N(2)-acetylornithine and glutamate. The chain is Arginine biosynthesis bifunctional protein ArgJ from Nitrosomonas europaea (strain ATCC 19718 / CIP 103999 / KCTC 2705 / NBRC 14298).